A 521-amino-acid chain; its full sequence is Ribonuclease Y (521 aa).

Residues 5–25 (TVWILISILLATVGAVVGFFV) form a helical membrane-spanning segment. A disordered region spans residues 87–117 (KQENRLMQKEENLDRKDETLDNRERQLEKKE). Residues 211 to 274 (TVSVVNLPND…ETARIALDKL (64 aa)) enclose the KH domain. The 94-residue stretch at 337–430 (VLKHSMEVAY…VAAADALSAA (94 aa)) folds into the HD domain.

The protein belongs to the RNase Y family.

The protein localises to the cell membrane. Functionally, endoribonuclease that initiates mRNA decay. This is Ribonuclease Y from Bacillus mycoides (strain KBAB4) (Bacillus weihenstephanensis).